The primary structure comprises 564 residues: Hsp70-Hsp90 organising protein (564 aa).

3 TPR repeats span residues 7-40 (AQRL…DPLD), 42-74 (VLYS…KKDW), and 76-108 (KGYI…DPNN). Residues 197–239 (EGNDAEERQRQQREEEERRKKKEEEERKKKEEEEMKKQNRTPE) are a coiled coil. Positions 199–247 (NDAEERQRQQREEEERRKKKEEEERKKKEEEEMKKQNRTPEQIQGDEHK) are disordered. Basic and acidic residues predominate over residues 201-233 (AEERQRQQREEEERRKKKEEEERKKKEEEEMKK). TPR repeat units lie at residues 243-276 (GDEH…NPND), 278-310 (MYHY…RYNF), 318-351 (AKLY…DNNR), 378-411 (AEEH…NPND), 413-445 (KLYS…DPTF), and 446-479 (VKAY…DPNN). The 40-residue stretch at 513–552 (DPEIQQIISDPQFQIILQKLNENPNSISEYIKDPKIFNGL) folds into the STI1 domain.

In terms of assembly, monomer. Homodimer. Forms a complex composed of HOP and chaperones HSP70 and HSP90; the interaction is stronger in the absence of ATP. Interacts (via TPR 1, 2, 3, 7, 8 and 9 repeats) with HSP70 (via C-terminus); the interaction is direct and is stronger in the absence of ATP. Interacts (via TPR 4, 5 and 6 repeats) with HSP90 (via C-terminus); the interaction is direct.

It is found in the cytoplasm. Acts as a co-chaperone and mediates the association of the chaperones HSP70 and HSP90 probably facilitating substrate transfer from HSP70 to HSP90. Stimulates HSP70 ATPase activity and, in contrast, inhibits HSP90 ATPase activity. This Plasmodium falciparum (isolate 3D7) protein is Hsp70-Hsp90 organising protein.